Here is an 876-residue protein sequence, read N- to C-terminus: Alanine--tRNA ligase (876 aa).

Lys74 is subject to N6-acetyllysine. Zn(2+) is bound by residues His564, His568, Cys666, and His670.

Belongs to the class-II aminoacyl-tRNA synthetase family. In terms of assembly, homotetramer. The cofactor is Zn(2+).

It localises to the cytoplasm. The catalysed reaction is tRNA(Ala) + L-alanine + ATP = L-alanyl-tRNA(Ala) + AMP + diphosphate. Catalyzes the attachment of alanine to tRNA(Ala) in a two-step reaction: alanine is first activated by ATP to form Ala-AMP and then transferred to the acceptor end of tRNA(Ala). Also edits incorrectly charged Ser-tRNA(Ala) and Gly-tRNA(Ala) via its editing domain. The chain is Alanine--tRNA ligase from Escherichia coli O6:K15:H31 (strain 536 / UPEC).